We begin with the raw amino-acid sequence, 436 residues long: Adenylosuccinate synthetase (436 aa).

Residues 13 to 19 (GDEGKGK) and 41 to 43 (GHT) contribute to the GTP site. Catalysis depends on D14, which acts as the Proton acceptor. Residues D14 and G41 each coordinate Mg(2+). IMP contacts are provided by residues 14–17 (DEGK), 39–42 (NAGH), T131, R145, Q226, T241, and R309. H42 serves as the catalytic Proton donor. A substrate-binding site is contributed by 305 to 311 (TVTGRKR). GTP-binding positions include R311, 337 to 339 (KLD), and 419 to 421 (STG).

It belongs to the adenylosuccinate synthetase family. Homodimer. It depends on Mg(2+) as a cofactor.

It localises to the cytoplasm. The enzyme catalyses IMP + L-aspartate + GTP = N(6)-(1,2-dicarboxyethyl)-AMP + GDP + phosphate + 2 H(+). It functions in the pathway purine metabolism; AMP biosynthesis via de novo pathway; AMP from IMP: step 1/2. In terms of biological role, plays an important role in the de novo pathway of purine nucleotide biosynthesis. Catalyzes the first committed step in the biosynthesis of AMP from IMP. This is Adenylosuccinate synthetase from Aromatoleum aromaticum (strain DSM 19018 / LMG 30748 / EbN1) (Azoarcus sp. (strain EbN1)).